Reading from the N-terminus, the 176-residue chain is ATP-dependent protease subunit HslV (176 aa).

Thr-2 is a catalytic residue. 3 residues coordinate Na(+): Gly-157, Cys-160, and Thr-163.

This sequence belongs to the peptidase T1B family. HslV subfamily. A double ring-shaped homohexamer of HslV is capped on each side by a ring-shaped HslU homohexamer. The assembly of the HslU/HslV complex is dependent on binding of ATP.

It localises to the cytoplasm. It catalyses the reaction ATP-dependent cleavage of peptide bonds with broad specificity.. Its activity is regulated as follows. Allosterically activated by HslU binding. In terms of biological role, protease subunit of a proteasome-like degradation complex believed to be a general protein degrading machinery. The polypeptide is ATP-dependent protease subunit HslV (Pseudomonas fluorescens (strain ATCC BAA-477 / NRRL B-23932 / Pf-5)).